Consider the following 265-residue polypeptide: tRNA pseudouridine synthase A (265 aa).

Asp52 (nucleophile) is an active-site residue. Substrate is bound at residue Tyr105.

It belongs to the tRNA pseudouridine synthase TruA family.

It carries out the reaction uridine(38/39/40) in tRNA = pseudouridine(38/39/40) in tRNA. Functionally, formation of pseudouridine at positions 38, 39 and 40 in the anticodon stem and loop of transfer RNAs. This chain is tRNA pseudouridine synthase A, found in Archaeoglobus fulgidus (strain ATCC 49558 / DSM 4304 / JCM 9628 / NBRC 100126 / VC-16).